A 27-amino-acid chain; its full sequence is MTQRPWSKLQRKTHNIAALKIIARRSE.

The protein is Protein YkiD of Escherichia coli (strain K12).